The chain runs to 154 residues: MPAEAKKPAPKAGRSRRKSRELVLKGIYLGLMNQKDTSVIIRELADDPDFDRADYEYFRQLLEGVAESIDELDARLAGLLDRQVSELSPIEHAILCIAAYELIHDVTIPYRVAINEGVELAKLYGGTDGHKYVNGVLDKIAAEARPDEFQRGRR.

Belongs to the NusB family.

Involved in transcription antitermination. Required for transcription of ribosomal RNA (rRNA) genes. Binds specifically to the boxA antiterminator sequence of the ribosomal RNA (rrn) operons. This is Transcription antitermination protein NusB from Methylobacillus flagellatus (strain ATCC 51484 / DSM 6875 / VKM B-1610 / KT).